Here is a 442-residue protein sequence, read N- to C-terminus: UDP-N-acetylmuramoylalanine--D-glutamate ligase (442 aa).

115–121 (GSNGKST) serves as a coordination point for ATP.

It belongs to the MurCDEF family.

It is found in the cytoplasm. The enzyme catalyses UDP-N-acetyl-alpha-D-muramoyl-L-alanine + D-glutamate + ATP = UDP-N-acetyl-alpha-D-muramoyl-L-alanyl-D-glutamate + ADP + phosphate + H(+). Its pathway is cell wall biogenesis; peptidoglycan biosynthesis. In terms of biological role, cell wall formation. Catalyzes the addition of glutamate to the nucleotide precursor UDP-N-acetylmuramoyl-L-alanine (UMA). In Vibrio vulnificus (strain YJ016), this protein is UDP-N-acetylmuramoylalanine--D-glutamate ligase.